We begin with the raw amino-acid sequence, 822 residues long: Nose resistant to fluoxetine protein 6 (822 aa).

The N-terminal stretch at 1 to 24 (MGNMRRLLIFAVLVILTVISNSKS) is a signal peptide. Asn236 carries N-linked (GlcNAc...) asparagine glycosylation. The next 3 membrane-spanning stretches (helical) occupy residues 306-326 (LAMFALYLLIATVVLVTFGTL), 617-637 (PYIRCTPFIVGIVVAYLLNAW), and 655-675 (IICWCTSTVLGLYSVFGLYWF).

The protein belongs to the acyltransferase 3 family. In L1 larvae through to adult, hyp3 and hyp5, the most anterior cells in the hypodermis, and in intestine. Other hypodermal cells show weaker expression.

It is found in the membrane. Its function is as follows. Plays a role in the uptake of a range of molecules including lipids and xenobiotic compounds from the intestine to surrounding tissues. Mediates transport of lipids from intestine to the reproductive tract. Required for efficient yolk transport into oocytes. Vital for embryonic development. In Caenorhabditis elegans, this protein is Nose resistant to fluoxetine protein 6 (nrf-6).